We begin with the raw amino-acid sequence, 90 residues long: Conotoxin Im6.2 (90 aa).

The first 18 residues, 1 to 18 (MKLTILLLVAALLVLTQA), serve as a signal peptide directing secretion. Positions 19-29 (RTERRRVKSRK) are excised as a propeptide. 3 disulfides stabilise this stretch: Cys61/Cys75, Cys68/Cys79, and Cys74/Cys84. At Glu89 the chain carries Glutamic acid 1-amide.

Belongs to the conotoxin O2 superfamily. Expressed by the venom duct.

It localises to the secreted. Probable neurotoxin. The protein is Conotoxin Im6.2 of Conus imperialis (Imperial cone).